Consider the following 444-residue polypeptide: Protein kinase C and casein kinase substrate in neurons protein 1 (444 aa).

Residues serine 2 and serine 79 each carry the phosphoserine modification. Residues 13-283 enclose the F-BAR domain; that stretch reads EETTDSFWEV…AIRGADAQED (271 aa). A coiled-coil region spans residues 26-275; the sequence is KRTVKRIDDG…HVYRELEQAI (250 aa). 2 disordered regions span residues 173-194 and 309-386; these read REMN…LQDK and LPHT…DDSK. Threonine 184 carries the phosphothreonine modification. Over residues 314–324 the composition is skewed to basic and acidic residues; sequence TKKEKQPKKAE. A compositionally biased stretch (polar residues) spans 329–351; it reads TNATGAVESTSQAGDRGSVSSYD. Phosphoserine is present on residues serine 346, serine 348, serine 349, serine 361, and serine 365. In terms of domain architecture, SH3 spans 385–444; sequence SKGVRVRALYDYDGQEQDELSFKAGDELTKLGEEDEQGWCRGRLDSGQLGLYPANYVEAI. Tyrosine 394 bears the Phosphotyrosine mark. Phosphoserine occurs at positions 405 and 430.

The protein belongs to the PACSIN family. As to quaternary structure, homodimer. May form heterooligomers with other PACSINs. Interacts with both COBL and DBNL. Identified in a complex composed of COBL, PACSIN1 and WASL. Interacts (via SH3 domain) with SYNJ1 and WASL. Interacts (via SH3 domain) with DNM1; the interaction is reduced by DNM1 phosphorylation. Interacts with DNM2 and DNM3. Interacts with MAPT. Interacts with EHD1 and EHD3. Interacts with TRPV4. Phosphorylated by casein kinase 2 (CK2) and protein kinase C (PKC).

It is found in the cytoplasm. The protein localises to the cell projection. Its subcellular location is the synapse. The protein resides in the synaptosome. It localises to the ruffle membrane. It is found in the membrane. The protein localises to the cytoplasmic vesicle membrane. Its subcellular location is the cytosol. The protein resides in the cell membrane. Its function is as follows. Binds to membranes via its F-BAR domain and mediates membrane tubulation. Plays a role in the reorganization of the microtubule cytoskeleton via its interaction with MAPT; this decreases microtubule stability and inhibits MAPT-induced microtubule polymerization. Plays a role in cellular transport processes by recruiting DNM1, DNM2 and DNM3 to membranes. Plays a role in the reorganization of the actin cytoskeleton and in neuron morphogenesis via its interaction with COBL and WASL, and by recruiting COBL to the cell cortex. Plays a role in the regulation of neurite formation, neurite branching and the regulation of neurite length. Required for normal synaptic vesicle endocytosis; this process retrieves previously released neurotransmitters to accommodate multiple cycles of neurotransmission. Required for normal excitatory and inhibitory synaptic transmission. The chain is Protein kinase C and casein kinase substrate in neurons protein 1 (Pacsin1) from Pongo abelii (Sumatran orangutan).